We begin with the raw amino-acid sequence, 276 residues long: NH(3)-dependent NAD(+) synthetase (276 aa).

46–53 (GISGGQDS) is an ATP binding site. Residue D52 coordinates Mg(2+). R141 provides a ligand contact to deamido-NAD(+). T161 lines the ATP pocket. Position 166 (E166) interacts with Mg(2+). Positions 174 and 181 each coordinate deamido-NAD(+). Positions 190 and 212 each coordinate ATP. Residue 261–262 (HK) participates in deamido-NAD(+) binding.

Belongs to the NAD synthetase family. In terms of assembly, homodimer.

The catalysed reaction is deamido-NAD(+) + NH4(+) + ATP = AMP + diphosphate + NAD(+) + H(+). It participates in cofactor biosynthesis; NAD(+) biosynthesis; NAD(+) from deamido-NAD(+) (ammonia route): step 1/1. Its function is as follows. Catalyzes the ATP-dependent amidation of deamido-NAD to form NAD. Uses ammonia as a nitrogen source. In Limosilactobacillus fermentum (strain NBRC 3956 / LMG 18251) (Lactobacillus fermentum), this protein is NH(3)-dependent NAD(+) synthetase.